The primary structure comprises 285 residues: Phosphatidate cytidylyltransferase (285 aa).

Transmembrane regions (helical) follow at residues 10 to 30 (FVLI…GFAI), 56 to 76 (VWLA…LPEY), 93 to 113 (LGWW…AAIW), 121 to 141 (LIFG…LRAW), 151 to 171 (AIWL…AYMF), 190 to 210 (WQGF…YGMW), 213 to 233 (LDVA…ASVL), and 264 to 284 (IDSL…VFRT).

This sequence belongs to the CDS family.

The protein resides in the cell inner membrane. The catalysed reaction is a 1,2-diacyl-sn-glycero-3-phosphate + CTP + H(+) = a CDP-1,2-diacyl-sn-glycerol + diphosphate. The protein operates within phospholipid metabolism; CDP-diacylglycerol biosynthesis; CDP-diacylglycerol from sn-glycerol 3-phosphate: step 3/3. The polypeptide is Phosphatidate cytidylyltransferase (cdsA) (Escherichia coli O157:H7).